A 392-amino-acid chain; its full sequence is Nuclear speckle splicing regulatory protein 1 homolog (392 aa).

3 disordered regions span residues 1-73, 113-169, and 187-357; these read MASK…IFDY, RQLE…AFND, and LLND…ARLD. Basic and acidic residues-rich tracts occupy residues 54–65, 113–132, 149–160, 205–238, and 313–357; these read KAAEREHQKAEA, RQLE…REKE, KQQEEVKKHREQ, QKNV…KSIY, and KSIE…ARLD. Residues 76–132 are a coiled coil; sequence NYDEIQAIKNEKKEEARKADKNRESKYAENIIKAHARRQLEQFSREERQQLREREKE.

Belongs to the NSRP1 family. In terms of tissue distribution, expressed in the intestine, nervous system and head neurons in both larvae and adults. Expressed in the distal tip cell.

It is found in the cytoplasm. Its subcellular location is the nucleus. In terms of biological role, required for the cessation of distal tip cell migration at the end of larval morphogenesis. The polypeptide is Nuclear speckle splicing regulatory protein 1 homolog (ccdc-55) (Caenorhabditis elegans).